The following is a 660-amino-acid chain: Acetyl-coenzyme A synthetase (660 aa).

CoA is bound by residues 197–200 (RGGK) and T317. ATP is bound by residues 397-399 (GEP), 421-426 (DTFWQT), D512, and R528. S536 lines the CoA pocket. R539 provides a ligand contact to ATP. Mg(2+) contacts are provided by V550 and V555. K625 carries the N6-acetyllysine modification.

This sequence belongs to the ATP-dependent AMP-binding enzyme family. Mg(2+) is required as a cofactor. Acetylated. Deacetylation by the SIR2-homolog deacetylase activates the enzyme.

The enzyme catalyses acetate + ATP + CoA = acetyl-CoA + AMP + diphosphate. Catalyzes the conversion of acetate into acetyl-CoA (AcCoA), an essential intermediate at the junction of anabolic and catabolic pathways. AcsA undergoes a two-step reaction. In the first half reaction, AcsA combines acetate with ATP to form acetyl-adenylate (AcAMP) intermediate. In the second half reaction, it can then transfer the acetyl group from AcAMP to the sulfhydryl group of CoA, forming the product AcCoA. The polypeptide is Acetyl-coenzyme A synthetase (Cupriavidus taiwanensis (strain DSM 17343 / BCRC 17206 / CCUG 44338 / CIP 107171 / LMG 19424 / R1) (Ralstonia taiwanensis (strain LMG 19424))).